Reading from the N-terminus, the 248-residue chain is Probable transcriptional regulatory protein M446_6579 (248 aa).

It belongs to the TACO1 family.

The protein localises to the cytoplasm. This is Probable transcriptional regulatory protein M446_6579 from Methylobacterium sp. (strain 4-46).